We begin with the raw amino-acid sequence, 347 residues long: N-acetyl-gamma-glutamyl-phosphate reductase (347 aa).

The active site involves Cys-155.

This sequence belongs to the NAGSA dehydrogenase family. Type 1 subfamily.

The protein resides in the cytoplasm. It carries out the reaction N-acetyl-L-glutamate 5-semialdehyde + phosphate + NADP(+) = N-acetyl-L-glutamyl 5-phosphate + NADPH + H(+). It functions in the pathway amino-acid biosynthesis; L-arginine biosynthesis; N(2)-acetyl-L-ornithine from L-glutamate: step 3/4. In terms of biological role, catalyzes the NADPH-dependent reduction of N-acetyl-5-glutamyl phosphate to yield N-acetyl-L-glutamate 5-semialdehyde. The protein is N-acetyl-gamma-glutamyl-phosphate reductase of Akkermansia muciniphila (strain ATCC BAA-835 / DSM 22959 / JCM 33894 / BCRC 81048 / CCUG 64013 / CIP 107961 / Muc).